A 92-amino-acid polypeptide reads, in one-letter code: Small ribosomal subunit protein uS19 (92 aa).

This sequence belongs to the universal ribosomal protein uS19 family.

Functionally, protein S19 forms a complex with S13 that binds strongly to the 16S ribosomal RNA. This chain is Small ribosomal subunit protein uS19, found in Desulfatibacillum aliphaticivorans.